We begin with the raw amino-acid sequence, 218 residues long: Serine/threonine-protein phosphatase 2 (218 aa).

4 residues coordinate Mn(2+): Asp22, His24, Asp51, and Asn77. The Proton donor role is filled by His78. Mn(2+) is bound at residue His187.

This sequence belongs to the PPP phosphatase family. PP-1 subfamily. The cofactor is Mn(2+).

It catalyses the reaction O-phospho-L-seryl-[protein] + H2O = L-seryl-[protein] + phosphate. The enzyme catalyses O-phospho-L-threonyl-[protein] + H2O = L-threonyl-[protein] + phosphate. With respect to regulation, inhibited by cadmium, copper, zinc when added activity but with less efficiency. Its function is as follows. Can hydrolyze phosphorylated Ser-, Thr- or Tyr-substrates in vitro. The natural substrate is unknown. The protein is Serine/threonine-protein phosphatase 2 (pphB) of Salmonella typhimurium (strain LT2 / SGSC1412 / ATCC 700720).